Here is a 151-residue protein sequence, read N- to C-terminus: 3-dehydroquinate dehydratase (151 aa).

Tyr-24 acts as the Proton acceptor in catalysis. Asn-76, His-82, and Asp-89 together coordinate substrate. His-102 serves as the catalytic Proton donor. Residues 103-104 and Arg-113 contribute to the substrate site; that span reads VS.

This sequence belongs to the type-II 3-dehydroquinase family. Homododecamer.

The enzyme catalyses 3-dehydroquinate = 3-dehydroshikimate + H2O. It participates in metabolic intermediate biosynthesis; chorismate biosynthesis; chorismate from D-erythrose 4-phosphate and phosphoenolpyruvate: step 3/7. Catalyzes a trans-dehydration via an enolate intermediate. This chain is 3-dehydroquinate dehydratase, found in Rhodopseudomonas palustris (strain ATCC BAA-98 / CGA009).